Here is an 80-residue protein sequence, read N- to C-terminus: Conotoxin SmIVB (80 aa).

Residues 1–21 (MGMRMMFTVFLLVVLATTVVS) form the signal peptide. The propeptide occupies 22-38 (IPSDRASDGRNAEVNER). Pro-40 is subject to 4-hydroxyproline. O-linked (HexNAc...) serine glycosylation occurs at Ser-45. 4-hydroxyproline is present on residues Pro-55, Pro-60, Pro-61, Pro-70, and Pro-72. Ser-75 is subject to Serine amide. Residues 76–80 (GRRNH) constitute a propeptide that is removed on maturation.

The protein belongs to the conotoxin A superfamily. In terms of processing, contains 3 disulfide bonds. Expressed by the venom duct.

Its subcellular location is the secreted. Neurotoxin with probable activity on sodium channel. Induces intense repetitive firing of the frog neuromuscular junction, leading to a tetanic contracture in muscle fiber (spastic paralysis). In vivo, shows the same effect as the whole venom when injected on fish prey. In Conus stercusmuscarum (Fly-specked cone), this protein is Conotoxin SmIVB.